A 145-amino-acid chain; its full sequence is uncharacterized protein (145 aa).

Disordered stretches follow at residues 1–41 (MRRL…PPGT) and 122–145 (RLPS…PLAL). A compositionally biased stretch (polar residues) spans 20 to 34 (GGPQNGTSGCTTAPQ). Positions 134 to 145 (DSQHPREVPLAL) are enriched in basic and acidic residues.

Ubiquitous.

This is an uncharacterized protein from Homo sapiens (Human).